The chain runs to 201 residues: Recombination protein RecR (201 aa).

The C4-type zinc-finger motif lies at 56 to 71 (CKICFNVSSDEVCQYC). In terms of domain architecture, Toprim spans 79-174 (SMICVVEESK…TVSRLASGLP (96 aa)).

It belongs to the RecR family.

Functionally, may play a role in DNA repair. It seems to be involved in an RecBC-independent recombinational process of DNA repair. It may act with RecF and RecO. The polypeptide is Recombination protein RecR (Cutibacterium acnes (strain DSM 16379 / KPA171202) (Propionibacterium acnes)).